A 517-amino-acid chain; its full sequence is Putative alpha-L-fucosidase 1 (517 aa).

Residues 1–20 (MATILLLLLGLLVGLPLLRA) form the signal peptide. Asn119, Asn249, Asn296, Asn321, Asn352, Asn496, and Asn511 each carry an N-linked (GlcNAc...) asparagine glycan.

Belongs to the glycosyl hydrolase 29 family.

It localises to the secreted. The protein resides in the extracellular space. The protein localises to the apoplast. The catalysed reaction is an alpha-L-fucoside + H2O = L-fucose + an alcohol. Alpha-L-fucosidase is responsible for hydrolyzing the alpha-1,6-linked fucose joined to the reducing-end N-acetylglucosamine of the carbohydrate moieties of glycoproteins. Active only against 2'-fucosyl-lactitol when heterologously expressed. In Oryza sativa subsp. japonica (Rice), this protein is Putative alpha-L-fucosidase 1.